A 57-amino-acid polypeptide reads, in one-letter code: Large ribosomal subunit protein bL33 (57 aa).

It belongs to the bacterial ribosomal protein bL33 family.

The sequence is that of Large ribosomal subunit protein bL33 from Shewanella sp. (strain W3-18-1).